Consider the following 100-residue polypeptide: uncharacterized protein (100 aa).

This is an uncharacterized protein from Escherichia phage P2 (Bacteriophage P2).